We begin with the raw amino-acid sequence, 671 residues long: DNA ligase (671 aa).

Residues 32–36, 81–82, and E113 contribute to the NAD(+) site; these read DVEYD and SL. K115 acts as the N6-AMP-lysine intermediate in catalysis. Positions 136, 173, 290, and 314 each coordinate NAD(+). Zn(2+)-binding residues include C408, C411, C426, and C432. Residues 593 to 671 form the BRCT domain; sequence EIDSPFAGKT…EAEMLRLLGS (79 aa).

This sequence belongs to the NAD-dependent DNA ligase family. LigA subfamily. Requires Mg(2+) as cofactor. It depends on Mn(2+) as a cofactor.

It catalyses the reaction NAD(+) + (deoxyribonucleotide)n-3'-hydroxyl + 5'-phospho-(deoxyribonucleotide)m = (deoxyribonucleotide)n+m + AMP + beta-nicotinamide D-nucleotide.. Its function is as follows. DNA ligase that catalyzes the formation of phosphodiester linkages between 5'-phosphoryl and 3'-hydroxyl groups in double-stranded DNA using NAD as a coenzyme and as the energy source for the reaction. It is essential for DNA replication and repair of damaged DNA. The protein is DNA ligase of Escherichia coli O17:K52:H18 (strain UMN026 / ExPEC).